The sequence spans 156 residues: Mediator of RNA polymerase II transcription subunit 28 (156 aa).

Positions 1–38 (MDYQQKPPQSSDPSPSPPDRPPGIRSPETPSNNQNNDI) are disordered. Positions 104–156 (PSRAESLKKDIAVMEEELKTKDELIKKHMRLFQESQKLVKEQIEKHRDELEKV) form a coiled coil.

The protein belongs to the Mediator complex subunit 28 family. Dimers. Component of the Mediator complex. Interacts with GEBPL.

It is found in the nucleus. Functionally, component of the Mediator complex, a coactivator involved in the regulated transcription of nearly all RNA polymerase II-dependent genes. Mediator functions as a bridge to convey information from gene-specific regulatory proteins to the basal RNA polymerase II transcription machinery. The Mediator complex, having a compact conformation in its free form, is recruited to promoters by direct interactions with regulatory proteins and serves for the assembly of a functional pre-initiation complex with RNA polymerase II and the general transcription factors. The chain is Mediator of RNA polymerase II transcription subunit 28 from Arabidopsis thaliana (Mouse-ear cress).